The primary structure comprises 591 residues: MAISNVISVLLLLLVLINLSNQNIKGIDAFHQIYEELQSESVESVNHLHRPSFHFQPPKHWINDPNGPVYYKGLYHLFYQYNTKGAVWGNIIWAHSVSKDLVNWEALEPALSPSKWFDIGGTWSGSITIVPGKGPIILYTGVNQNETQLQNYAIPEDPSDPYLRKWIKPDDNPIAIPDYTMNGSAFRDPTTAWFSKDGHWRTVVGSKRKRRGIAYIYRSRDFKHWVKAKHPVHSKQSTGMWECPDFFPVSLTDFRNGLDLDYVGPNTKHVLKVSLDITRYEYYTLGKYDLKKDRYIPDGNTPDGWEGLRFDYGNFYASKTFFDYKKNRRILWGWANESDTVEDDILKGWAGLQVIPRTVLLDSSKKQLVFWPVEEIESLRGNYVRMNNHDIKMGQRIEVKGITPAQADVEVTFYVGSLEKAEIFDPSFTWKPLELCNIKGSNVRGGVGPFGLITLATPDLEEYTPVFFRVFNDTKTHKPKVLMCSDARPSSLKQDTGLLAKDRMYKPSFAGFVDVDMADGRISLRSLIDHSVVESFGALGKTVITSRVYPVKAVKENAHLYVFNNGTQTVTIESLNAWNMDRPLQMNDGAL.

The first 22 residues, 1–22 (MAISNVISVLLLLLVLINLSNQ), serve as a signal peptide directing secretion. Substrate is bound by residues 61-64 (WIND), glutamine 80, tryptophan 88, and 123-124 (WS). Aspartate 64 is an active-site residue. Residues asparagine 145 and asparagine 182 are each glycosylated (N-linked (GlcNAc...) asparagine). Residues 187-188 (RD), glutamate 242, and aspartate 276 each bind substrate. Asparagine 336, asparagine 472, and asparagine 565 each carry an N-linked (GlcNAc...) asparagine glycan. An intrachain disulfide couples cysteine 436 to cysteine 484.

Belongs to the glycosyl hydrolase 32 family. As to expression, expressed in flowers, and seeds, and, to a lower extent, in seedlings.

The protein localises to the secreted. The protein resides in the extracellular space. It localises to the apoplast. It is found in the cell wall. It catalyses the reaction Hydrolysis of terminal non-reducing beta-D-fructofuranoside residues in beta-D-fructofuranosides.. In Arabidopsis thaliana (Mouse-ear cress), this protein is Beta-fructofuranosidase, insoluble isoenzyme CWINV4 (CWINV4).